Consider the following 804-residue polypeptide: DNA mismatch repair protein MutS (804 aa).

An ATP-binding site is contributed by 614 to 621; it reads GPNMAGKS.

It belongs to the DNA mismatch repair MutS family.

In terms of biological role, this protein is involved in the repair of mismatches in DNA. It is possible that it carries out the mismatch recognition step. This protein has a weak ATPase activity. This Ehrlichia chaffeensis (strain ATCC CRL-10679 / Arkansas) protein is DNA mismatch repair protein MutS.